The following is a 200-amino-acid chain: Histone chaperone asf1b (200 aa).

It belongs to the ASF1 family. Interacts with histone H3 and histone H4.

It localises to the nucleus. Histone chaperone that facilitates histone deposition and histone exchange and removal during nucleosome assembly and disassembly. The polypeptide is Histone chaperone asf1b (asf1b) (Xenopus tropicalis (Western clawed frog)).